Reading from the N-terminus, the 755-residue chain is Polycomb protein SUZ12 (755 aa).

Disordered regions lie at residues 26-79, 333-377, and 392-420; these read KMGN…RRIS, NANG…SRRA, and AVGRETRNNSNKRRRGGAYGEDHPPSDDR. Residues 30-42 are compositionally biased toward low complexity; it reads KASSQAQKRSQSQ. 2 stretches are compositionally biased toward polar residues: residues 43-57 and 349-359; these read TGDSATSRPATDGSG and TQPNGTHNEGT. Over residues 411–420 the composition is skewed to basic and acidic residues; sequence GEDHPPSDDR. The C2H2-type zinc-finger motif lies at 436–458; that stretch reads FACLICGAENERLSQLRAHYMCH. Residues 580–645 are polycomb protein VEFS-Box; that stretch reads IDDSWLLLKH…KADWLVSKRS (66 aa).

It belongs to the VEFS (VRN2-EMF2-FIS2-SU(Z)12) family. Component of the polycomb repressive complex 2 (PRC2) that consists of four core subunits icluding EZH2, EED, SUZ12, and RBBP4, among which EZH2 is the catalytic subunit and which minimally requires EED and SUZ12 for catalysis.

Its subcellular location is the nucleus. Functionally, component of the of the Polycomb Repressive Complex 2 (PRC2), a histone H3 lysine methyltransferase responsible for generating mono-, di-, and tri-methylation on Lys27 (H3K27me1, H3K27me2 and H3K27me3). The tri-methylated form is known to be critical in gene repression, and its proper placement is essential in defining repression patterns during development. SUZ12 is not a catalytic subunit but is required for the complex regulation of histone H3 lysine methylation by EZH2. This is Polycomb protein SUZ12 from Chaetomium thermophilum (strain DSM 1495 / CBS 144.50 / IMI 039719) (Thermochaetoides thermophila).